We begin with the raw amino-acid sequence, 152 residues long: Transcriptional regulator MraZ (152 aa).

2 SpoVT-AbrB domains span residues 5–52 (ASAI…PLKE) and 81–124 (ATEC…SDAE).

The protein belongs to the MraZ family. As to quaternary structure, forms oligomers.

It is found in the cytoplasm. It localises to the nucleoid. The polypeptide is Transcriptional regulator MraZ (Pasteurella multocida (strain Pm70)).